The primary structure comprises 956 residues: RNA-binding protein 44 (956 aa).

The interval 301 to 321 is disordered; sequence DNTQNNQNQSYNPTEENDHNV. The region spanning 750–824 is the RRM domain; sequence SLLCITCLPG…HAVQVVHLSG (75 aa). A disordered region spans residues 831–855; it reads KPSDLSHSASESHKEDTAGDELRTK. Basic and acidic residues predominate over residues 840–854; it reads SESHKEDTAGDELRT.

The protein resides in the cytoplasm. In terms of biological role, component of intercellular bridges during meiosis. Intercellular bridges are evolutionarily conserved structures that connect differentiating germ cells. Not required for fertility. The protein is RNA-binding protein 44 (rbm44) of Danio rerio (Zebrafish).